Reading from the N-terminus, the 208-residue chain is MAVSISSLTSSFASLSFTSNLTPKPQTLPMARTKPFSLSNPAVVKPLVITATSATAPVEVAETADLEKFVKSRLPGGFAAQTVIGTGRRKCAIARVVLQEGTGKFIINYRDAKEYLQGNPLWLQYVKTPLATLGYETNYDVFVKAHGGGLSGQAQAISLGVARALLKVSASHRAPLKQEGLLTRDSRIVERKKPGLKKARKAPQFSKR.

A chloroplast-targeting transit peptide spans 1 to 51 (MAVSISSLTSSFASLSFTSNLTPKPQTLPMARTKPFSLSNPAVVKPLVITA). T52 bears the N-acetylthreonine mark. Residues 185-208 (DSRIVERKKPGLKKARKAPQFSKR) are disordered. Positions 194-208 (PGLKKARKAPQFSKR) are enriched in basic residues.

As to quaternary structure, component of the chloroplast small ribosomal subunit (SSU). Mature 70S chloroplast ribosomes of higher plants consist of a small (30S) and a large (50S) subunit. The 30S small subunit contains 1 molecule of ribosomal RNA (16S rRNA) and 24 different proteins. The 50S large subunit contains 3 rRNA molecules (23S, 5S and 4.5S rRNA) and 33 different proteins. uS9c binds directly to 16S ribosomal RNA. uS9c interacts with translation factor pY (PSRP1).

The protein resides in the plastid. The protein localises to the chloroplast. Functionally, component of the chloroplast ribosome (chloro-ribosome), a dedicated translation machinery responsible for the synthesis of chloroplast genome-encoded proteins, including proteins of the transcription and translation machinery and components of the photosynthetic apparatus. This is Small ribosomal subunit protein uS9c (PRPS9) from Spinacia oleracea (Spinach).